A 200-amino-acid polypeptide reads, in one-letter code: Dephospho-CoA kinase (200 aa).

In terms of domain architecture, DPCK spans 3 to 200; sequence VLGLTGSIGM…LSGKPAAATR (198 aa). 11–16 serves as a coordination point for ATP; it reads GMGKTT.

This sequence belongs to the CoaE family.

It localises to the cytoplasm. The enzyme catalyses 3'-dephospho-CoA + ATP = ADP + CoA + H(+). It functions in the pathway cofactor biosynthesis; coenzyme A biosynthesis; CoA from (R)-pantothenate: step 5/5. Its function is as follows. Catalyzes the phosphorylation of the 3'-hydroxyl group of dephosphocoenzyme A to form coenzyme A. The polypeptide is Dephospho-CoA kinase (Brucella abortus (strain 2308)).